The following is a 228-amino-acid chain: Protein GrpE (228 aa).

Disordered stretches follow at residues 1-31 (MADEKNKSQNPDLEQRDINNPRDREALNRAA) and 209-228 (GVSKGGPKATADNGASEGNG).

This sequence belongs to the GrpE family. Homodimer.

It is found in the cytoplasm. Functionally, participates actively in the response to hyperosmotic and heat shock by preventing the aggregation of stress-denatured proteins, in association with DnaK and GrpE. It is the nucleotide exchange factor for DnaK and may function as a thermosensor. Unfolded proteins bind initially to DnaJ; upon interaction with the DnaJ-bound protein, DnaK hydrolyzes its bound ATP, resulting in the formation of a stable complex. GrpE releases ADP from DnaK; ATP binding to DnaK triggers the release of the substrate protein, thus completing the reaction cycle. Several rounds of ATP-dependent interactions between DnaJ, DnaK and GrpE are required for fully efficient folding. This chain is Protein GrpE, found in Brucella anthropi (strain ATCC 49188 / DSM 6882 / CCUG 24695 / JCM 21032 / LMG 3331 / NBRC 15819 / NCTC 12168 / Alc 37) (Ochrobactrum anthropi).